A 215-amino-acid polypeptide reads, in one-letter code: Ribose-5-phosphate isomerase A (215 aa).

Substrate-binding positions include 26 to 29 (TGST), 79 to 82 (DGAD), and 92 to 95 (KGGG). Glu-101 serves as the catalytic Proton acceptor. Lys-119 contributes to the substrate binding site.

The protein belongs to the ribose 5-phosphate isomerase family. In terms of assembly, homodimer.

It catalyses the reaction aldehydo-D-ribose 5-phosphate = D-ribulose 5-phosphate. It participates in carbohydrate degradation; pentose phosphate pathway; D-ribose 5-phosphate from D-ribulose 5-phosphate (non-oxidative stage): step 1/1. Catalyzes the reversible conversion of ribose-5-phosphate to ribulose 5-phosphate. The sequence is that of Ribose-5-phosphate isomerase A from Xanthomonas euvesicatoria pv. vesicatoria (strain 85-10) (Xanthomonas campestris pv. vesicatoria).